We begin with the raw amino-acid sequence, 231 residues long: dTTP/UTP pyrophosphatase (231 aa).

Catalysis depends on Asp85, which acts as the Proton acceptor.

The protein belongs to the Maf family. YhdE subfamily. A divalent metal cation serves as cofactor.

Its subcellular location is the cytoplasm. The catalysed reaction is dTTP + H2O = dTMP + diphosphate + H(+). It carries out the reaction UTP + H2O = UMP + diphosphate + H(+). Its function is as follows. Nucleoside triphosphate pyrophosphatase that hydrolyzes dTTP and UTP. May have a dual role in cell division arrest and in preventing the incorporation of modified nucleotides into cellular nucleic acids. In Psychrobacter arcticus (strain DSM 17307 / VKM B-2377 / 273-4), this protein is dTTP/UTP pyrophosphatase.